Reading from the N-terminus, the 488-residue chain is Ribulose bisphosphate carboxylase large chain (488 aa).

Substrate contacts are provided by N127 and T177. K179 serves as the catalytic Proton acceptor. K181 provides a ligand contact to substrate. Residues K205, D207, and E208 each coordinate Mg(2+). Residue K205 is modified to N6-carboxylysine. The Proton acceptor role is filled by H297. 3 residues coordinate substrate: R298, H330, and S382.

It belongs to the RuBisCO large chain family. Type I subfamily. Heterohexadecamer of 8 large chains and 8 small chains. The cofactor is Mg(2+).

It is found in the plastid. It localises to the chloroplast. The enzyme catalyses 2 (2R)-3-phosphoglycerate + 2 H(+) = D-ribulose 1,5-bisphosphate + CO2 + H2O. The catalysed reaction is D-ribulose 1,5-bisphosphate + O2 = 2-phosphoglycolate + (2R)-3-phosphoglycerate + 2 H(+). Functionally, ruBisCO catalyzes two reactions: the carboxylation of D-ribulose 1,5-bisphosphate, the primary event in carbon dioxide fixation, as well as the oxidative fragmentation of the pentose substrate in the photorespiration process. Both reactions occur simultaneously and in competition at the same active site. This Pyropia dentata (Red alga) protein is Ribulose bisphosphate carboxylase large chain (rbcL).